The sequence spans 156 residues: Ribosome maturation factor RimP (156 aa).

Belongs to the RimP family.

It localises to the cytoplasm. Its function is as follows. Required for maturation of 30S ribosomal subunits. The polypeptide is Ribosome maturation factor RimP (Oenococcus oeni (strain ATCC BAA-331 / PSU-1)).